The primary structure comprises 777 residues: Zinc finger FYVE domain-containing protein 1 (777 aa).

The segment at 416–777 is required for localization in the lipid droplets; the sequence is MAHSSFFPDE…FNCNKKPGDL (362 aa). 2 consecutive FYVE-type zinc fingers follow at residues 598 to 659 and 715 to 775; these read NSQI…DARN and DHEI…KKPG. Residues cysteine 604, cysteine 607, cysteine 620, cysteine 623, cysteine 628, cysteine 631, cysteine 651, cysteine 654, cysteine 721, cysteine 724, cysteine 737, cysteine 740, cysteine 745, cysteine 748, cysteine 767, and cysteine 770 each coordinate Zn(2+).

Interacts with RAB18 (in GTP-bound form). Interacts with BSCL2 in a RAB18-dependent manner. Interacts with ZW10. Ubiquitous.

The protein resides in the golgi apparatus. It is found in the golgi stack. The protein localises to the endoplasmic reticulum. It localises to the preautophagosomal structure. Its subcellular location is the lipid droplet. The protein resides in the mitochondrion. Functionally, plays a role in the formation of lipid droplets (LDs) which are storage organelles at the center of lipid and energy homeostasis. Regulates the morphology, size and distribution of LDs. Mediates the formation of endoplasmic reticulum-lipid droplets (ER-LD) contact sites by forming a complex with RAB18 and ZW10. Binds to phosphatidylinositol 3-phosphate (PtdIns3P) through FYVE-type zinc finger. In Mus musculus (Mouse), this protein is Zinc finger FYVE domain-containing protein 1 (Zfyve1).